The primary structure comprises 380 residues: Actinidain (380 aa).

Positions 1-24 (MGLPKSFVSMSLLFFSTLLILSLA) are cleaved as a signal peptide. Positions 25–126 (FNAKNLTQRT…NQYEPRVGQV (102 aa)) are cleaved as a propeptide — activation peptide. Disulfide bonds link Cys-148–Cys-191, Cys-182–Cys-224, and Cys-282–Cys-332. Residue Cys-151 is part of the active site. E64 is bound at residue Cys-151. Residues His-288 and Asn-308 contribute to the active site.

It belongs to the peptidase C1 family. In terms of tissue distribution, fruit.

It catalyses the reaction Specificity close to that of papain.. Repressed by the active-site-directed cysteine protease inhibitor E64 (L-trans-epoxysuccinyl-leucylamide-(4-guanido)-butane) produced by Aspergillus japonicus. Its function is as follows. Cysteine protease responsible for the cleavage of kiwellin into kissper and KiTH. This chain is Actinidain, found in Actinidia chinensis var. chinensis (Chinese soft-hair kiwi).